Consider the following 446-residue polypeptide: MQNTTVLYVPIGRKTFDIEVAEIYRQKSMEWLKGNCSTVIAPEQIVTSVEELQGFLDSIKGNKIDTVLYQSVTFADGEFMVKILEYFKQPVIVWSVREPSVGGRLRLNSLTGGNSTSNVLRNHQHPFAFVFGNPDEKALQERLLRQINVMRVLKALNELKIGVVGDYPPGFFFSAANEEELKSALGVTLHKMDLQEAFKECVKLPEQEWIGEVERAEKQVIGLNRNDETVTKFAQFSTYIKKHIQSEELDALAMRCWPDFFNDLGAAPCSTLSQFTEDGMVTSCESDIHGSISMFILRELAGGNAPYLGDLVHIDEEKNSVVFWHCGAGAYSLANPSTGATAGVHPNRKIGFAMDFGLKAGEVTIFRVSHTPDGYRLLVMKGNALDVEQPFTGTSVEVELATNASDTLYELMHAGYEPHFALVYGDVTEHLIELGRMLNLETKVYV.

It belongs to the SqvD family.

The enzyme catalyses 6-sulfo-beta-D-quinovose = 6-deoxy-6-sulfo-D-fructose. Functionally, part of the sulfo-TAL (or sulfo-SFT) pathway, a D-sulfoquinovose degradation pathway that produces sulfolactate (SL). Catalyzes the isomerization of sulfoquinovose (SQ) to 6-deoxy-6-sulfo-D-fructose (SF). The protein is Sulfoquinovose isomerase of Priestia aryabhattai (Bacillus aryabhattai).